The chain runs to 883 residues: Alanine--tRNA ligase (883 aa).

Residues His565, His569, Cys675, and His679 each coordinate Zn(2+).

Belongs to the class-II aminoacyl-tRNA synthetase family. Zn(2+) is required as a cofactor.

The protein resides in the cytoplasm. It catalyses the reaction tRNA(Ala) + L-alanine + ATP = L-alanyl-tRNA(Ala) + AMP + diphosphate. In terms of biological role, catalyzes the attachment of alanine to tRNA(Ala) in a two-step reaction: alanine is first activated by ATP to form Ala-AMP and then transferred to the acceptor end of tRNA(Ala). Also edits incorrectly charged Ser-tRNA(Ala) and Gly-tRNA(Ala) via its editing domain. The sequence is that of Alanine--tRNA ligase from Rhodospirillum rubrum (strain ATCC 11170 / ATH 1.1.1 / DSM 467 / LMG 4362 / NCIMB 8255 / S1).